Consider the following 384-residue polypeptide: S-adenosylmethionine synthase (384 aa).

Position 15 (His-15) interacts with ATP. Residue Asp-17 coordinates Mg(2+). Glu-43 is a binding site for K(+). Residues Glu-56 and Gln-99 each coordinate L-methionine. Residues 99-109 (QSPDINQGVDR) are flexible loop. Residues 164-166 (DAK), 230-231 (RF), Asp-239, 245-246 (RK), Ala-262, and Lys-266 each bind ATP. Asp-239 lines the L-methionine pocket. Lys-270 contributes to the L-methionine binding site.

Belongs to the AdoMet synthase family. As to quaternary structure, homotetramer; dimer of dimers. The cofactor is Mg(2+). Requires K(+) as cofactor.

The protein resides in the cytoplasm. The enzyme catalyses L-methionine + ATP + H2O = S-adenosyl-L-methionine + phosphate + diphosphate. Its pathway is amino-acid biosynthesis; S-adenosyl-L-methionine biosynthesis; S-adenosyl-L-methionine from L-methionine: step 1/1. Catalyzes the formation of S-adenosylmethionine (AdoMet) from methionine and ATP. The overall synthetic reaction is composed of two sequential steps, AdoMet formation and the subsequent tripolyphosphate hydrolysis which occurs prior to release of AdoMet from the enzyme. The chain is S-adenosylmethionine synthase from Proteus mirabilis (strain HI4320).